Consider the following 138-residue polypeptide: Basic phospholipase A2 Mtx-b (138 aa).

A signal peptide spans 1-16 (MRALWIVAVLLVGVEG). 7 cysteine pairs are disulfide-bonded: Cys-42–Cys-131, Cys-44–Cys-60, Cys-59–Cys-111, Cys-65–Cys-138, Cys-66–Cys-104, Cys-73–Cys-97, and Cys-91–Cys-102. Ca(2+) is bound by residues Tyr-43, Gly-45, and Gly-47. His-63 is a catalytic residue. Position 64 (Asp-64) interacts with Ca(2+). Asp-105 is a catalytic residue.

In terms of assembly, heterodimer of an acidic subunit and a basic chain. The acidic subunit is non-toxic, without enzymatic activity and comprises 3 peptides that are cross-linked by 7 disulfide bridges. The basic subunit is toxic, has phospholipase A2 activity and is composed of a single chain. It depends on Ca(2+) as a cofactor. Expressed by the venom gland.

Its subcellular location is the secreted. It catalyses the reaction a 1,2-diacyl-sn-glycero-3-phosphocholine + H2O = a 1-acyl-sn-glycero-3-phosphocholine + a fatty acid + H(+). Its function is as follows. Snake venom phospholipase A2 (PLA2) that inhibits neuromuscular transmission by blocking acetylcholine release from the nerve termini. PLA2 catalyzes the calcium-dependent hydrolysis of the 2-acyl groups in 3-sn-phosphoglycerides. The protein is Basic phospholipase A2 Mtx-b of Crotalus scutulatus scutulatus (Mojave rattlesnake).